Consider the following 249-residue polypeptide: ATP synthase subunit a (249 aa).

The next 6 helical transmembrane spans lie at 30–50, 84–104, 114–134, 143–163, 196–216, and 221–241; these read SAYM…GVAG, FFPL…VGII, LIVT…YGFY, IFVP…IEVF, LLAG…GMVI, and LELL…CIYL.

It belongs to the ATPase A chain family. F-type ATPases have 2 components, CF(1) - the catalytic core - and CF(0) - the membrane proton channel. CF(1) has five subunits: alpha(3), beta(3), gamma(1), delta(1), epsilon(1). CF(0) has four main subunits: a, b, b' and c.

The protein localises to the cell inner membrane. Its function is as follows. Key component of the proton channel; it plays a direct role in the translocation of protons across the membrane. The sequence is that of ATP synthase subunit a from Rhodopseudomonas palustris (strain BisB18).